The primary structure comprises 266 residues: Putative tyrosine phosphatase 197R (266 aa).

The Tyrosine-protein phosphatase domain maps to 15–167; sequence RPTLGSLSDK…LFGSQNINND (153 aa). The active-site Phosphocysteine intermediate is the C111.

This sequence belongs to the protein-tyrosine phosphatase family.

The catalysed reaction is O-phospho-L-tyrosyl-[protein] + H2O = L-tyrosyl-[protein] + phosphate. In Invertebrate iridescent virus 6 (IIV-6), this protein is Putative tyrosine phosphatase 197R.